The sequence spans 85 residues: Large ribosomal subunit protein eL34 (85 aa).

This sequence belongs to the eukaryotic ribosomal protein eL34 family.

The protein is Large ribosomal subunit protein eL34 of Saccharolobus islandicus (strain M.16.27) (Sulfolobus islandicus).